The following is a 353-amino-acid chain: Photosystem II protein D1 (353 aa).

T2 carries the N-acetylthreonine modification. The residue at position 2 (T2) is a Phosphothreonine. The next 3 membrane-spanning stretches (helical) occupy residues 29-46 (YIGW…TATS), 118-133 (HFLL…EWEL), and 142-156 (WIAV…AATA). H118 serves as a coordination point for chlorophyll a. Y126 is a binding site for pheophytin a. D170 and E189 together coordinate [CaMn4O5] cluster. Residues 197 to 218 (FHMLGVAGVFGGSLFSAMHGSL) form a helical membrane-spanning segment. H198 contributes to the chlorophyll a binding site. Residues H215 and 264–265 (SF) each bind a quinone. H215 is a binding site for Fe cation. Fe cation is bound at residue H272. Residues 274-288 (FLAAWPVVGIWFTAL) form a helical membrane-spanning segment. Residues H332, E333, D342, and A344 each contribute to the [CaMn4O5] cluster site. The propeptide occupies 345 to 353 (ALEVPSLNG).

Belongs to the reaction center PufL/M/PsbA/D family. PSII is composed of 1 copy each of membrane proteins PsbA, PsbB, PsbC, PsbD, PsbE, PsbF, PsbH, PsbI, PsbJ, PsbK, PsbL, PsbM, PsbT, PsbX, PsbY, PsbZ, Psb30/Ycf12, at least 3 peripheral proteins of the oxygen-evolving complex and a large number of cofactors. It forms dimeric complexes. Requires The D1/D2 heterodimer binds P680, chlorophylls that are the primary electron donor of PSII, and subsequent electron acceptors. It shares a non-heme iron and each subunit binds pheophytin, quinone, additional chlorophylls, carotenoids and lipids. D1 provides most of the ligands for the Mn4-Ca-O5 cluster of the oxygen-evolving complex (OEC). There is also a Cl(-1) ion associated with D1 and D2, which is required for oxygen evolution. The PSII complex binds additional chlorophylls, carotenoids and specific lipids. as cofactor. In terms of processing, tyr-161 forms a radical intermediate that is referred to as redox-active TyrZ, YZ or Y-Z. Post-translationally, C-terminally processed by CTPA; processing is essential to allow assembly of the oxygen-evolving complex and thus photosynthetic growth.

Its subcellular location is the plastid. It is found in the chloroplast thylakoid membrane. It carries out the reaction 2 a plastoquinone + 4 hnu + 2 H2O = 2 a plastoquinol + O2. Functionally, photosystem II (PSII) is a light-driven water:plastoquinone oxidoreductase that uses light energy to abstract electrons from H(2)O, generating O(2) and a proton gradient subsequently used for ATP formation. It consists of a core antenna complex that captures photons, and an electron transfer chain that converts photonic excitation into a charge separation. The D1/D2 (PsbA/PsbD) reaction center heterodimer binds P680, the primary electron donor of PSII as well as several subsequent electron acceptors. This chain is Photosystem II protein D1, found in Lolium perenne (Perennial ryegrass).